Reading from the N-terminus, the 251-residue chain is CDP-diacylglycerol pyrophosphatase (251 aa).

A helical transmembrane segment spans residues 4-24; sequence AGLLFLVMIVIAVVAAGIGYW.

This sequence belongs to the Cdh family.

It is found in the cell inner membrane. The enzyme catalyses a CDP-1,2-diacyl-sn-glycerol + H2O = a 1,2-diacyl-sn-glycero-3-phosphate + CMP + 2 H(+). The protein operates within phospholipid metabolism; CDP-diacylglycerol degradation; phosphatidate from CDP-diacylglycerol: step 1/1. This chain is CDP-diacylglycerol pyrophosphatase, found in Escherichia coli O7:K1 (strain IAI39 / ExPEC).